An 86-amino-acid polypeptide reads, in one-letter code: Neurotoxin LmNaTx17 (86 aa).

The N-terminal stretch at 1–18 (MKILFVIVLAAFFIGVHC) is a signal peptide. In terms of domain architecture, LCN-type CS-alpha/beta spans 19–85 (KHGYPVQYSG…TWDYKTGKCR (67 aa)). Intrachain disulfides connect cysteine 33-cysteine 84, cysteine 37-cysteine 58, cysteine 44-cysteine 65, and cysteine 48-cysteine 67.

The protein belongs to the long (4 C-C) scorpion toxin superfamily. Sodium channel inhibitor family. Beta subfamily. In terms of tissue distribution, expressed by the venom gland.

It localises to the secreted. In terms of biological role, binds voltage-independently at site-4 of sodium channels (Nav) and shift the voltage of activation toward more negative potentials thereby affecting sodium channel activation and promoting spontaneous and repetitive firing. The protein is Neurotoxin LmNaTx17 of Lychas mucronatus (Chinese swimming scorpion).